A 377-amino-acid chain; its full sequence is Stimulator of interferon genes protein (377 aa).

Topologically, residues 1-21 (MRRAEENNGFGTIPKRRNQHT) are cytoplasmic. Residues 22–42 (PFYASIGMIVVIIVAFTSYHI) form a helical membrane-spanning segment. The Extracellular portion of the chain corresponds to 43–57 (TSYGDDRNRAMRQYS). Residues 58–80 (FTFSLAYLAFLVGELLRRCCLFA) traverse the membrane as a helical segment. Residues 81 to 101 (EEYRHIETRYNGSLKKAIQTT) lie on the Cytoplasmic side of the membrane. A helical membrane pass occupies residues 102-122 (FSFGHNNVLFVASLLFFVVFV). Residues 123-154 (ASNDPNGSSSVIQGNSTAEPHTEMRQTSGWQG) lie on the Extracellular side of the membrane. Residues 155-175 (LWGQFIISALLTPLVVHLLGL) traverse the membrane as a helical segment. Topologically, residues 176 to 377 (RELSKVEESQ…LKDSELEIGG (202 aa)) are cytoplasmic. Residues Tyr206, Arg272, 278–279 (RH), and Thr303 contribute to the 2',3'-cGAMP site. Residues Tyr206, Arg272, Arg278, and 300–303 (EYAT) contribute to the 3',3'-c-di-GMP site.

It belongs to the TMEM173 family. Homodimer.

The protein resides in the endoplasmic reticulum membrane. In terms of biological role, sensor of cytosolic DNA from bacteria and viruses that promotes autophagy. Acts by recognizing and binding cyclic GMP-AMP (cGAMP), a messenger produced by CGAS in response to DNA in the cytosol. Following cGAMP-binding, promotes the formation of autophagosomes, leading to target cytosolic DNA for degradation by the lysosome. Exhibits guanine base-specific ligand recognition. Binds 3'-3'linked cGAMP, 2'-3' linked cGAMP and 3'-3' linked c-di-GMP with much greater affinity as compared to 3'-3' linked c-di-AMP. Lacks the C-terminal tail (CTT) found in mammalian orthologs which is essential for interferon signaling. The polypeptide is Stimulator of interferon genes protein (Nematostella vectensis (Starlet sea anemone)).